The sequence spans 598 residues: Probable ATP-dependent RNA helicase DDX52 (598 aa).

Lys15 carries the post-translational modification N6-acetyllysine. Position 39 is a phosphoserine (Ser39). The Q motif motif lies at 166 to 194 (QLDQEYKINSRLLQNILDAGFQVPTPIQM). The Helicase ATP-binding domain maps to 197–375 (IPVMLHGREL…KLNLDNVVSV (179 aa)). 210–217 (APTGSGKT) contacts ATP. Positions 319-322 (DESD) match the DEAD box motif. A Helicase C-terminal domain is found at 386-547 (TVEQELLFVG…PVPEYIKGFQ (162 aa)).

It belongs to the DEAD box helicase family. DDX52/ROK1 subfamily.

Its subcellular location is the nucleus. It localises to the nucleolus. It catalyses the reaction ATP + H2O = ADP + phosphate + H(+). Functionally, required for efficient ribosome biogenesis. May control cell cycle progression by regulating translation of mRNAs that contain a terminal oligo pyrimidine (TOP) motif in their 5' UTRs, such as GTPBP4. This chain is Probable ATP-dependent RNA helicase DDX52 (Ddx52), found in Mus musculus (Mouse).